Reading from the N-terminus, the 179-residue chain is Peptidyl-tRNA hydrolase 2, mitochondrial (179 aa).

The chain crosses the membrane as a helical span at residues 10–32 (YLTNPGALSLAAGVACGVCLGWG). Residues Lys-76, Lys-81, Lys-95, Lys-106, Lys-115, Lys-171, and Lys-177 each participate in a glycyl lysine isopeptide (Lys-Gly) (interchain with G-Cter in ubiquitin) cross-link.

The protein belongs to the PTH2 family. In terms of assembly, monomer. Ubiquitinated by PRKN during mitophagy, leading to its degradation and enhancement of mitophagy. Deubiquitinated by USP30.

It is found in the mitochondrion outer membrane. It carries out the reaction an N-acyl-L-alpha-aminoacyl-tRNA + H2O = an N-acyl-L-amino acid + a tRNA + H(+). In terms of biological role, peptidyl-tRNA hydrolase which releases tRNAs from the ribosome during protein synthesis. Promotes caspase-independent apoptosis by regulating the function of two transcriptional regulators, AES and TLE1. The sequence is that of Peptidyl-tRNA hydrolase 2, mitochondrial (PTRH2) from Bos taurus (Bovine).